The chain runs to 798 residues: Heterogeneous nuclear ribonucleoprotein U (798 aa).

At S2 the chain carries N-acetylserine. S4 carries the post-translational modification Phosphoserine. The SAP domain occupies 8–42 (VKKLKVSELKEELKKRRLSDKGLKADLMDRLQAAL). An N6-acetyllysine mark is found at K17 and K21. The disordered stretch occupies residues 41 to 229 (ALDNEAGGRP…VKRPREDHGR (189 aa)). S58 is subject to Phosphoserine. 2 stretches are compositionally biased toward low complexity: residues 71–80 (AGLEQEAAAG) and 103–113 (ENGAAGAADAG). Composition is skewed to acidic residues over residues 114 to 128 (AMEEEEAASEDENGD) and 134 to 147 (EGEDELGDEEEGAG). Over residues 153–169 (GEQQSQPPAAAQQASQQ) the composition is skewed to low complexity. Position 179 is an N6-acetyllysine (K179). The residue at position 180 (S180) is an ADP-ribosylserine. The segment covering 192-203 (APPGARQGQQQA) has biased composition (low complexity). A compositionally biased stretch (basic and acidic residues) spans 207–229 (GKTEQKAGDKKRGVKRPREDHGR). R229 bears the Citrulline mark. K239 bears the N6-acetyllysine; alternate mark. Residue K239 forms a Glycyl lysine isopeptide (Lys-Gly) (interchain with G-Cter in SUMO1); alternate linkage. K239 participates in a covalent cross-link: Glycyl lysine isopeptide (Lys-Gly) (interchain with G-Cter in SUMO2); alternate. Y240 is modified (phosphotyrosine). Phosphoserine is present on residues S241 and S245. A B30.2/SPRY domain is found at 242–438 (RAKSPQPPVE…VEFNFGQKEK (197 aa)). T260 carries the phosphothreonine modification. An N6-acetyllysine modification is found at K326. An ATPase domain region spans residues 462–646 (PKGPEEKKDC…QKLLEQYKEE (185 aa)). Residue K469 forms a Glycyl lysine isopeptide (Lys-Gly) (interchain with G-Cter in SUMO2) linkage. ATP is bound at residue 478–485 (GLPGAGKT). N6-acetyllysine; alternate occurs at positions 490 and 498. Residues K490 and K498 each participate in a glycyl lysine isopeptide (Lys-Gly) (interchain with G-Cter in SUMO2); alternate cross-link. At T506 the chain carries Phosphothreonine. K510 is covalently cross-linked (Glycyl lysine isopeptide (Lys-Gly) (interchain with G-Cter in SUMO2)). K525 is subject to N6-acetyllysine. K539 carries the N6-acetyllysine; alternate modification. Residue K539 forms a Glycyl lysine isopeptide (Lys-Gly) (interchain with G-Cter in SUMO2); alternate linkage. A Glycyl lysine isopeptide (Lys-Gly) (interchain with G-Cter in SUMO2) cross-link involves residue K548. The residue at position 556 (T556) is a Phosphothreonine. Residues K583 and K600 each participate in a glycyl lysine isopeptide (Lys-Gly) (interchain with G-Cter in SUMO2) cross-link. The segment at 585-600 (EDYKQRTQKKAEVEGK) is actin-binding. K609 bears the N6-acetyllysine; alternate mark. K609 is covalently cross-linked (Glycyl lysine isopeptide (Lys-Gly) (interchain with G-Cter in SUMO2); alternate). Positions 624–651 (DEITYVELQKEEAQKLLEQYKEESKKAL) form a coiled coil. Residues K638 and K644 each participate in a glycyl lysine isopeptide (Lys-Gly) (interchain with G-Cter in SUMO2) cross-link. Residues 645-657 (EESKKALPPEKKQ) are compositionally biased toward basic and acidic residues. The disordered stretch occupies residues 645 to 727 (EESKKALPPE…GSGGIGYPYP (83 aa)). R676 is subject to Omega-N-methylarginine. Positions 684-702 (GGFNMRGGNFRGGAPGNRG) are enriched in gly residues. The segment at 688–713 (MRGGNFRGGAPGNRGGYNRRGNMPQR) is RNA-binding RGG-box. Asymmetric dimethylarginine occurs at positions 689, 694, and 701. An asymmetric dimethylarginine; alternate mark is found at R707 and R713. Omega-N-methylarginine; alternate occurs at positions 707 and 713. Residues 713–723 (RGGGGGSGGIG) show a composition bias toward gly residues. R728 and R735 each carry asymmetric dimethylarginine. The tract at residues 743 to 772 (NYNRGGMPNRGNYNQNFRGRGNNRGYKNQS) is disordered. N6-acetyllysine; alternate is present on K787. K787 participates in a covalent cross-link: Glycyl lysine isopeptide (Lys-Gly) (interchain with G-Cter in SUMO2); alternate.

Oligomer (via ATPase domain and RNA-binding RGG-box region); oligomerization occurs upon ATP-binding in a chromatin-associated RNAs (caRNAs)- and transcription-dependent manner and is required for chromatin decompaction. ATP hydrolysis is required to cycle from an oligomeric to monomeric state to compact chromatin. Component of the coding region determinant (CRD)-mediated complex, composed of DHX9, HNRNPU, IGF2BP1, SYNCRIP and YBX1. Identified in the spliceosome C complex. Identified in a IGF2BP1-dependent mRNP granule complex containing untranslated mRNAs. Associates with heterogeneous nuclear ribonucleoprotein (hnRNP) particles. Associates (via middle region) with the C-terminal domain (CTD) RNA polymerase II (Pol II) holoenzyme; this association occurs in a RNA-independent manner. Associates (via middle region) with the core-TFIIH basal transcription factor complex; this association inhibits the CTD phosphorylation of RNA polymerase II holoenzyme by down-regulating TFIIH kinase activity. Associates with the telomerase holoenzyme complex. Associates with spindle microtubules (MTs) in a TPX2-dependent manner. Interacts (via C-terminus) with actin; this interaction is direct and mediates association with the phosphorylated CTD of RNA polymerase II and is disrupted in presence of the long non-coding H19 RNA. Interacts with AURKA. Interacts (via C-terminus) with CBX5; this interaction is, at least in part, RNA-dependent. Interacts with CR2. Interacts with CRY1. Interacts (via C-terminus) with EP300; this interaction enhances DNA-binding to nuclear scaffold/matrix attachment region (S/MAR) elements. Interacts with ERBB4. Interacts with GEMIN5. Interacts with IGF2BP1. Interacts with IGF2BP2 and IGF2BP3. Interacts with NCL; this interaction occurs during mitosis. Interacts (via C-terminus) with NR3C1 (via C-terminus). Interacts with PLK1; this interaction induces phosphorylation of HNRNPU at Ser-58 in mitosis. Interacts with POU3F4. Interacts with SMARCA4; this interaction occurs in embryonic stem cells and stimulates global Pol II-mediated transcription. Interacts (via C-terminus) with TOP2A; this interaction protects the topoisomerase TOP2A from degradation and positively regulates the relaxation of supercoiled DNA by TOP2A in a RNA-dependent manner. Interacts with TPX2; this interaction recruits HNRNPU to spindle microtubules (MTs). Interacts with UBQLN2. Interacts (via RNA-binding RGG-box region) with ZBTB7B; the interaction facilitates the recruitment of long non-coding RNA Blnc1 by ZBTB7B. Interacts with ERCC6. In terms of processing, cleaved at Asp-94 by CASP3 during T-cell apoptosis, resulting in a loss of DNA- and chromatin-binding activities. Extensively phosphorylated. Phosphorylated on Ser-58 by PLK1 and dephosphorylated by protein phosphatase 2A (PP2A) in mitosis. Post-translationally, arg-707 and Arg-713 are dimethylated, probably to asymmetric dimethylarginine. In terms of processing, citrullinated by PADI4.

It localises to the nucleus. The protein localises to the nucleus matrix. It is found in the chromosome. Its subcellular location is the nucleus speckle. The protein resides in the cytoplasm. It localises to the cytoskeleton. The protein localises to the microtubule organizing center. It is found in the centrosome. Its subcellular location is the centromere. The protein resides in the kinetochore. It localises to the spindle. The protein localises to the spindle pole. It is found in the midbody. Its subcellular location is the cell surface. The protein resides in the cytoplasmic granule. In terms of biological role, DNA- and RNA-binding protein involved in several cellular processes such as nuclear chromatin organization, telomere-length regulation, transcription, mRNA alternative splicing and stability, Xist-mediated transcriptional silencing and mitotic cell progression. Plays a role in the regulation of interphase large-scale gene-rich chromatin organization through chromatin-associated RNAs (caRNAs) in a transcription-dependent manner, and thereby maintains genomic stability. Required for the localization of the long non-coding Xist RNA on the inactive chromosome X (Xi) and the subsequent initiation and maintenance of X-linked transcriptional gene silencing during X-inactivation. Required for the topoisomerase TOP2A protein stability and activity in a RNA-dependent manner. Plays a role as a RNA polymerase II (Pol II) holoenzyme transcription regulator. Promotes transcription initiation by direct association with the core-TFIIH basal transcription factor complex for the assembly of a functional pre-initiation complex with Pol II in a actin-dependent manner. Blocks Pol II transcription elongation activity by inhibiting the C-terminal domain (CTD) phosphorylation of Pol II and dissociates from Pol II pre-initiation complex prior to productive transcription elongation. Positively regulates CBX5-induced transcriptional gene silencing and retention of CBX5 in the nucleus. Negatively regulates glucocorticoid-mediated transcriptional activation. Key regulator of transcription initiation and elongation in embryonic stem cells upon leukemia inhibitory factor (LIF) signaling. Involved in the long non-coding RNA H19-mediated Pol II transcriptional repression. Participates in the circadian regulation of the core clock component BMAL1 transcription. Plays a role in the regulation of telomere length. Plays a role as a global pre-mRNA alternative splicing modulator by regulating U2 small nuclear ribonucleoprotein (snRNP) biogenesis. Plays a role in mRNA stability. Component of the CRD-mediated complex that promotes MYC mRNA stabilization. Enhances the expression of specific genes, such as tumor necrosis factor TNFA, by regulating mRNA stability, possibly through binding to the 3'-untranslated region (UTR). Plays a role in mitotic cell cycle regulation. Involved in the formation of stable mitotic spindle microtubules (MTs) attachment to kinetochore, spindle organization and chromosome congression. Phosphorylation at Ser-58 by PLK1 is required for chromosome alignement and segregation and progression through mitosis. Also contributes to the targeting of AURKA to mitotic spindle MTs. Binds to double- and single-stranded DNA and RNA, poly(A), poly(C) and poly(G) oligoribonucleotides. Binds to chromatin-associated RNAs (caRNAs). Associates with chromatin to scaffold/matrix attachment region (S/MAR) elements in DNA. Associates with chromatin in a chromatin-associated RNAs (caRNAs)-dependent manner. Binds to the Xist RNA. Binds the long non-coding H19 RNA. Binds to SMN1/2 pre-mRNAs at G/U-rich regions. Binds to small nuclear RNAs (snRNAs). Binds to the 3'-UTR of TNFA mRNA. Binds (via RNA-binding RGG-box region) to the long non-coding Xist RNA; this binding is direct and bridges the Xist RNA and the inactive chromosome X (Xi). Also negatively regulates embryonic stem cell differentiation upon LIF signaling. Required for embryonic development. Binds to brown fat long non-coding RNA 1 (Blnc1); facilitates the recruitment of Blnc1 by ZBTB7B required to drive brown and beige fat development and thermogenesis. This Rattus norvegicus (Rat) protein is Heterogeneous nuclear ribonucleoprotein U.